Consider the following 283-residue polypeptide: Bifunctional protein FolD (283 aa).

NADP(+) contacts are provided by residues 165 to 167 (GRS), Ser190, and Ile231.

It belongs to the tetrahydrofolate dehydrogenase/cyclohydrolase family. As to quaternary structure, homodimer.

It carries out the reaction (6R)-5,10-methylene-5,6,7,8-tetrahydrofolate + NADP(+) = (6R)-5,10-methenyltetrahydrofolate + NADPH. The enzyme catalyses (6R)-5,10-methenyltetrahydrofolate + H2O = (6R)-10-formyltetrahydrofolate + H(+). It functions in the pathway one-carbon metabolism; tetrahydrofolate interconversion. Catalyzes the oxidation of 5,10-methylenetetrahydrofolate to 5,10-methenyltetrahydrofolate and then the hydrolysis of 5,10-methenyltetrahydrofolate to 10-formyltetrahydrofolate. The sequence is that of Bifunctional protein FolD from Herminiimonas arsenicoxydans.